The sequence spans 105 residues: Met repressor (105 aa).

It belongs to the MetJ family. Homodimer.

Its subcellular location is the cytoplasm. This regulatory protein, when combined with SAM (S-adenosylmethionine) represses the expression of the methionine regulon and of enzymes involved in SAM synthesis. In Hamiltonella defensa subsp. Acyrthosiphon pisum (strain 5AT), this protein is Met repressor.